The chain runs to 306 residues: Oxygen-dependent coproporphyrinogen-III oxidase (306 aa).

Ser-94 serves as a coordination point for substrate. Residues His-98 and His-108 each contribute to the a divalent metal cation site. His-108 acts as the Proton donor in catalysis. 110–112 provides a ligand contact to substrate; sequence NVR. His-147 and His-177 together coordinate a divalent metal cation. The interval 242 to 277 is important for dimerization; the sequence is YVEFNLVYDRGTLFGLQTGGRTESILMSMPPLVRWE. Substrate is bound at residue 260 to 262; it reads GGR.

The protein belongs to the aerobic coproporphyrinogen-III oxidase family. Homodimer. A divalent metal cation serves as cofactor.

The protein localises to the cytoplasm. The catalysed reaction is coproporphyrinogen III + O2 + 2 H(+) = protoporphyrinogen IX + 2 CO2 + 2 H2O. It functions in the pathway porphyrin-containing compound metabolism; protoporphyrin-IX biosynthesis; protoporphyrinogen-IX from coproporphyrinogen-III (O2 route): step 1/1. Its function is as follows. Involved in the heme biosynthesis. Catalyzes the aerobic oxidative decarboxylation of propionate groups of rings A and B of coproporphyrinogen-III to yield the vinyl groups in protoporphyrinogen-IX. This Shewanella woodyi (strain ATCC 51908 / MS32) protein is Oxygen-dependent coproporphyrinogen-III oxidase.